A 183-amino-acid polypeptide reads, in one-letter code: Ribulose bisphosphate carboxylase small subunit, chloroplastic (183 aa).

The transit peptide at 1–59 directs the protein to the chloroplast; that stretch reads MASSMISSGTVATVSADRPAPAQARMVAPFTGLKSSSASPVTRKSNDITSIASNGGRVQ.

This sequence belongs to the RuBisCO small chain family. Heterohexadecamer of 8 large and 8 small subunits.

It localises to the plastid. The protein resides in the chloroplast. RuBisCO catalyzes two reactions: the carboxylation of D-ribulose 1,5-bisphosphate, the primary event in carbon dioxide fixation, as well as the oxidative fragmentation of the pentose substrate. Both reactions occur simultaneously and in competition at the same active site. Although the small subunit is not catalytic it is essential for maximal activity. This is Ribulose bisphosphate carboxylase small subunit, chloroplastic from Malus sp. (Crab apple).